The sequence spans 1367 residues: Histone acetyltransferase HAC2 (1367 aa).

Residues 110–151 (TSSIPGSSGSASETNSGSDITKQDFKNDSPSDSKKVQGSSTS) form a disordered region. Residues 111–127 (SSIPGSSGSASETNSGS) are compositionally biased toward low complexity. Residues 130–144 (TKQDFKNDSPSDSKK) are compositionally biased toward basic and acidic residues. 12 tandem repeats follow at residues 188–200 (KLGTVVDIVEPMK), 223–235 (KVYSFADVVTTTK), 251–263 (KLGTVVDIIEPMK), 286–298 (KVYSFADVVTTTK), 314–326 (KLGTVVDIVEPMK), 349–361 (KVYSFADVVTTTK), 377–389 (KLGTVVDIVEPMK), 418–430 (KLGTVVDIVEPMK), 432–444 (DEGSKCEVTTTNK), 459–471 (KLGIGVDIVEPMK), 473–485 (DEGTKCEVTTTNK), and 500–512 (KLGIGVDIVEPMK). The interval 188–512 (KLGTVVDIVE…IGVDIVEPMK (325 aa)) is 12 X 13 AA approximate repeats. A PHD-type zinc finger spans residues 688–765 (HQICSPCHSR…EYICPTCLLE (78 aa)). The CBP/p300-type HAT domain maps to 780-1213 (DSGAKDLPET…ILHHLHTSNK (434 aa)). Residues 903 to 905 (LDS), 922 to 923 (RT), and W978 contribute to the acetyl-CoA site. The ZZ-type 1; degenerate zinc-finger motif lies at 1094–1157 (ELNYSCTRCS…QLSKVQVNGV (64 aa)). Zn(2+) contacts are provided by C1099, C1102, C1123, C1126, C1225, C1228, C1240, C1243, C1249, C1252, H1261, and H1263. Residues 1220 to 1273 (SSSLTCTACKKDVSTTIYFPCLLCPDYRACTGCYTKNRTLRHLHIFPTLPSANR) form a ZZ-type 2 zinc finger. The segment at 1274-1359 (APSRTVMVLE…NCPVPQCRDR (86 aa)) adopts a TAZ-type zinc-finger fold.

Rosette leaves, stems and flowers.

The protein resides in the nucleus. It catalyses the reaction L-lysyl-[protein] + acetyl-CoA = N(6)-acetyl-L-lysyl-[protein] + CoA + H(+). In terms of biological role, acetyltransferase enzyme. Acetylates histones, giving a specific tag for transcriptional activation. No acetyltransferase activity found in vitro. This chain is Histone acetyltransferase HAC2 (HAC2), found in Arabidopsis thaliana (Mouse-ear cress).